A 141-amino-acid polypeptide reads, in one-letter code: Hemoglobin subunit alpha-1 (141 aa).

In terms of domain architecture, Globin spans 1-141 (VLTDAEKKEV…VATVLTSKYR (141 aa)). Position 58 (His58) interacts with O2. His87 contributes to the heme b binding site.

Belongs to the globin family. As to quaternary structure, heterotetramer of two alpha chains and two beta chains. Red blood cells.

In terms of biological role, involved in oxygen transport from the lung to the various peripheral tissues. The protein is Hemoglobin subunit alpha-1 of Tachyglossus aculeatus aculeatus (Southeast Australian short-beaked echidna).